A 110-amino-acid chain; its full sequence is Chelonianin (110 aa).

A Pyrrolidone carboxylic acid modification is found at Gln-1. The BPTI/Kunitz inhibitor domain maps to 8 to 58; sequence CRLPPEQGPCKGRIPRYFYNPASRMCESFIYGGCKGNKNNFKTKAECVRAC. 7 disulfides stabilise this stretch: Cys-8-Cys-58, Cys-17-Cys-41, Cys-33-Cys-54, Cys-67-Cys-92, Cys-76-Cys-97, Cys-80-Cys-93, and Cys-86-Cys-101. The 46-residue stretch at 60–105 folds into the WAP domain; it reads PPERPGVCPKTSGPGICLHGCDSDSDCKEGQKCCFDGCGYICLTVA.

Its function is as follows. The first domain inhibits trypsin; the second one inhibitis subtilisin. The chain is Chelonianin from Caretta caretta (Loggerhead sea turtle).